Reading from the N-terminus, the 267-residue chain is Urease accessory protein UreD (267 aa).

Belongs to the UreD family. As to quaternary structure, ureD, UreF and UreG form a complex that acts as a GTP-hydrolysis-dependent molecular chaperone, activating the urease apoprotein by helping to assemble the nickel containing metallocenter of UreC. The UreE protein probably delivers the nickel.

The protein resides in the cytoplasm. In terms of biological role, required for maturation of urease via the functional incorporation of the urease nickel metallocenter. This chain is Urease accessory protein UreD, found in Synechococcus sp. (strain JA-2-3B'a(2-13)) (Cyanobacteria bacterium Yellowstone B-Prime).